Reading from the N-terminus, the 263-residue chain is uncharacterized protein (263 aa).

Residue 31-38 participates in ATP binding; the sequence is GPTGSGKT.

The protein belongs to the CbbQ/NirQ/NorQ/GpvN family.

This is an uncharacterized protein from Staphylococcus haemolyticus (strain JCSC1435).